A 145-amino-acid chain; its full sequence is SsrA-binding protein (145 aa).

The protein belongs to the SmpB family.

The protein localises to the cytoplasm. Its function is as follows. Required for rescue of stalled ribosomes mediated by trans-translation. Binds to transfer-messenger RNA (tmRNA), required for stable association of tmRNA with ribosomes. tmRNA and SmpB together mimic tRNA shape, replacing the anticodon stem-loop with SmpB. tmRNA is encoded by the ssrA gene; the 2 termini fold to resemble tRNA(Ala) and it encodes a 'tag peptide', a short internal open reading frame. During trans-translation Ala-aminoacylated tmRNA acts like a tRNA, entering the A-site of stalled ribosomes, displacing the stalled mRNA. The ribosome then switches to translate the ORF on the tmRNA; the nascent peptide is terminated with the 'tag peptide' encoded by the tmRNA and targeted for degradation. The ribosome is freed to recommence translation, which seems to be the essential function of trans-translation. The protein is SsrA-binding protein of Mesomycoplasma hyopneumoniae (strain 232) (Mycoplasma hyopneumoniae).